A 107-amino-acid polypeptide reads, in one-letter code: Large ribosomal subunit protein uL24 (107 aa).

The protein belongs to the universal ribosomal protein uL24 family. As to quaternary structure, part of the 50S ribosomal subunit.

One of two assembly initiator proteins, it binds directly to the 5'-end of the 23S rRNA, where it nucleates assembly of the 50S subunit. In terms of biological role, one of the proteins that surrounds the polypeptide exit tunnel on the outside of the subunit. The polypeptide is Large ribosomal subunit protein uL24 (Nitrosomonas eutropha (strain DSM 101675 / C91 / Nm57)).